Reading from the N-terminus, the 278-residue chain is uncharacterized protein (278 aa).

The N-terminal stretch at 1-32 (MSSASFTTKALSVLAALTAASAPLVAASPAHA) is a signal peptide. The Peptidase S1 domain maps to 33–236 (LANARNVTGS…HAEWIAYYTG (204 aa)). Cysteine 59 and cysteine 75 are oxidised to a cystine. Active-site charge relay system residues include histidine 74, aspartate 123, and serine 189.

Belongs to the peptidase S1 family.

Its subcellular location is the secreted. This is an uncharacterized protein from Corynebacterium glutamicum (strain R).